We begin with the raw amino-acid sequence, 418 residues long: Glutamyl-tRNA reductase (418 aa).

Substrate contacts are provided by residues 57–60 (TCNR), serine 113, 118–120 (DFE), and glutamine 124. Residue cysteine 58 is the Nucleophile of the active site. Position 193–198 (193–198 (GTGKIG)) interacts with NADP(+).

It belongs to the glutamyl-tRNA reductase family. As to quaternary structure, homodimer.

It carries out the reaction (S)-4-amino-5-oxopentanoate + tRNA(Glu) + NADP(+) = L-glutamyl-tRNA(Glu) + NADPH + H(+). It participates in porphyrin-containing compound metabolism; protoporphyrin-IX biosynthesis; 5-aminolevulinate from L-glutamyl-tRNA(Glu): step 1/2. Catalyzes the NADPH-dependent reduction of glutamyl-tRNA(Glu) to glutamate 1-semialdehyde (GSA). This chain is Glutamyl-tRNA reductase, found in Christiangramia forsetii (strain DSM 17595 / CGMCC 1.15422 / KT0803) (Gramella forsetii).